Here is a 540-residue protein sequence, read N- to C-terminus: Phosphoenolpyruvate carboxykinase (ATP) (540 aa).

Arg-65 is a substrate binding site. At Lys-87 the chain carries N6-acetyllysine. Residues Tyr-207 and Lys-213 each contribute to the substrate site. ATP is bound by residues Lys-213, His-232, and 248 to 256 (GLSGTGKTT). The Mn(2+) site is built by Lys-213 and His-232. Residue Asp-269 coordinates Mn(2+). ATP-binding positions include Glu-297, Arg-333, 449 to 450 (RI), and Thr-455. A substrate-binding site is contributed by Arg-333. Lys-523 carries the post-translational modification N6-acetyllysine.

Belongs to the phosphoenolpyruvate carboxykinase (ATP) family. Monomer. It depends on Mn(2+) as a cofactor.

The protein localises to the cytoplasm. The enzyme catalyses oxaloacetate + ATP = phosphoenolpyruvate + ADP + CO2. It participates in carbohydrate biosynthesis; gluconeogenesis. Its function is as follows. Involved in the gluconeogenesis. Catalyzes the conversion of oxaloacetate (OAA) to phosphoenolpyruvate (PEP) through direct phosphoryl transfer between the nucleoside triphosphate and OAA. This chain is Phosphoenolpyruvate carboxykinase (ATP), found in Shigella dysenteriae serotype 1 (strain Sd197).